The chain runs to 295 residues: ATP synthase gamma chain (295 aa).

The protein belongs to the ATPase gamma chain family. In terms of assembly, F-type ATPases have 2 components, CF(1) - the catalytic core - and CF(0) - the membrane proton channel. CF(1) has five subunits: alpha(3), beta(3), gamma(1), delta(1), epsilon(1). CF(0) has three main subunits: a, b and c.

Its subcellular location is the cell inner membrane. Produces ATP from ADP in the presence of a proton gradient across the membrane. The gamma chain is believed to be important in regulating ATPase activity and the flow of protons through the CF(0) complex. The protein is ATP synthase gamma chain of Sulfurovum sp. (strain NBC37-1).